Here is a 419-residue protein sequence, read N- to C-terminus: Phosphatidylcholine:ceramide cholinephosphotransferase 1 (419 aa).

One can recognise an SAM domain in the interval 13-76; the sequence is WSPKKVADWL…LDMIETLKME (64 aa). Ser14 carries the phosphoserine modification. 5 helical membrane passes run 142–162, 190–210, 221–241, 282–302, and 310–330; these read FLAFLYALSCFVLTTVMISVV, FSICEINGMILVGLWLFQWLL, FFCIVGTLYLYRCITMYVTTL, MCGDYLYSGHTVMLTLTYLFI, and LWWYHWICWLLSVVGIFCILL. His291 is a catalytic residue. Topologically, residues 331 to 419 are cytoplasmic; that stretch reads AHDHYTVDVV…VKYSRLVNDT (89 aa). Residues His334 and Asp338 contribute to the active site.

It belongs to the sphingomyelin synthase family. As to expression, isoform 1 is widely expressed, isoform 2 shows a more narrow distribution and isoform 3 is detected only in testis and heart.

It is found in the golgi apparatus membrane. The catalysed reaction is an N-acylsphing-4-enine + a 1,2-diacyl-sn-glycero-3-phosphocholine = a sphingomyelin + a 1,2-diacyl-sn-glycerol. It catalyses the reaction 1-(9Z-octadecenoyl)-2-acyl-sn-3-glycerol + a sphingomyelin = a 1-(9Z-octadecenoyl)-2-acyl-sn-glycero-3-phosphocholine + an N-acylsphing-4-enine. It carries out the reaction N-hexadecanoylsphinganine + a 1,2-diacyl-sn-glycero-3-phosphocholine = N-hexadecanoyl-sphinganine-1-phosphocholine + a 1,2-diacyl-sn-glycerol. The enzyme catalyses N-hexadecanoyl-(4R)-hydroxysphinganine + a 1,2-diacyl-sn-glycero-3-phosphocholine = N-hexadecanoyl-(4R)-hydroxysphinganine-phosphocholine + a 1,2-diacyl-sn-glycerol. The catalysed reaction is an N-acylsphing-4-enine + a 1,2-diacyl-sn-glycero-3-phosphoethanolamine = an N-acylsphing-4-enine 1-phosphoethanolamine + a 1,2-diacyl-sn-glycerol. It participates in sphingolipid metabolism. Its function is as follows. Major sphingomyelin synthase at the Golgi apparatus. Catalyzes the reversible transfer of phosphocholine moiety in sphingomyelin biosynthesis: in the forward reaction transfers phosphocholine head group of phosphatidylcholine (PC) on to ceramide (CER) to form ceramide phosphocholine (sphingomyelin, SM) and diacylglycerol (DAG) as by-product, and in the reverse reaction transfers phosphocholine from SM to DAG to form PC and CER. The direction of the reaction depends on the levels of CER and DAG in Golgi membranes. Converts the newly synthesized CER, that is transported from the endoplasmic reticulum to the trans-Golgi by the Cer transport protein (CERT), to SM. Can form a heteromeric complex with glucosylceramide synthase (GCS) increasing SMS activity and reducing glucosylceramide synthesis, a critical mechanism that controls the metabolic fate of CER in the Golgi. Does not use free phosphorylcholine or CDP-choline as donor. Can also transfer phosphoethanolamine head group of phosphatidylethanolamine (PE) on to CER to form ceramide phosphoethanolamine (CPE). Regulates receptor-mediated signal transduction via mitogenic DAG and proapoptotic CER, as well as via SM, a structural component of membrane rafts that serve as platforms for signal transduction and protein sorting. Plays a role in secretory transport via regulation of DAG pool at the Golgi apparatus and its downstream effects on PRKD1. (Microbial infection) Contributes to the brain SM production for Japanese encephalitis virus attachment and infection. The sequence is that of Phosphatidylcholine:ceramide cholinephosphotransferase 1 (Sgms1) from Mus musculus (Mouse).